The chain runs to 399 residues: S-adenosylmethionine synthase (399 aa).

His-17 lines the ATP pocket. Mg(2+) is bound at residue Asp-19. Residue Glu-45 participates in K(+) binding. 2 residues coordinate L-methionine: Glu-58 and Gln-101. Residues 101–111 (QSADIAMGVDQ) form a flexible loop region. ATP-binding positions include 177–179 (DGK), 244–245 (RF), Asp-253, 259–260 (RK), Ala-276, and Lys-280. Asp-253 is an L-methionine binding site. Lys-284 contributes to the L-methionine binding site.

It belongs to the AdoMet synthase family. Homotetramer; dimer of dimers. Mg(2+) is required as a cofactor. K(+) serves as cofactor.

The protein localises to the cytoplasm. The enzyme catalyses L-methionine + ATP + H2O = S-adenosyl-L-methionine + phosphate + diphosphate. It functions in the pathway amino-acid biosynthesis; S-adenosyl-L-methionine biosynthesis; S-adenosyl-L-methionine from L-methionine: step 1/1. Functionally, catalyzes the formation of S-adenosylmethionine (AdoMet) from methionine and ATP. The overall synthetic reaction is composed of two sequential steps, AdoMet formation and the subsequent tripolyphosphate hydrolysis which occurs prior to release of AdoMet from the enzyme. The sequence is that of S-adenosylmethionine synthase from Bacillus cereus (strain ATCC 10987 / NRS 248).